The primary structure comprises 482 residues: Alpha-ketoglutarate semialdehyde dehydrogenase (482 aa).

Positions 1 to 28 (MTDPSKNYVNGEWVTSETGETTEVTNPA) are disordered. A compositionally biased stretch (low complexity) spans 11–25 (GEWVTSETGETTEVT). Cys-284 is an active-site residue.

This sequence belongs to the aldehyde dehydrogenase family. Homotetramer.

The catalysed reaction is 2,5-dioxopentanoate + NADP(+) + H2O = 2-oxoglutarate + NADPH + 2 H(+). It functions in the pathway carbohydrate metabolism; D-xylose degradation. In terms of biological role, alpha-ketoglutarate semialdehyde dehydrogenase involved in the degradation of D-xylose, a major component of hemicelluloses such as xylan. Catalyzes the fifth reaction in the xylose utilization pathway through dehydratation of alpha-ketoglutarate semialdehyde (2,5-dioxopentanoate) into alpha-ketoglutarate. In Haloferax volcanii (strain ATCC 29605 / DSM 3757 / JCM 8879 / NBRC 14742 / NCIMB 2012 / VKM B-1768 / DS2) (Halobacterium volcanii), this protein is Alpha-ketoglutarate semialdehyde dehydrogenase.